The sequence spans 386 residues: 3-ketosteroid-9-alpha-monooxygenase, oxygenase component (386 aa).

One can recognise a Rieske domain in the interval Trp-26–Val-128. Residues Cys-67, His-69, Cys-86, and His-89 each coordinate [2Fe-2S] cluster. Asn-175, His-181, His-186, and Asp-304 together coordinate Fe cation.

Homotrimer. The two-component system 3-ketosteroid-9-alpha-monooxygenase is composed of an oxygenase component KshA and a reductase component KshB. The cofactor is [2Fe-2S] cluster. Requires Fe cation as cofactor.

The enzyme catalyses androsta-1,4-diene-3,17-dione + 2 reduced [2Fe-2S]-[ferredoxin] + O2 + 2 H(+) = 9alpha-hydroxyandrosta-1,4-diene-3,17-dione + 2 oxidized [2Fe-2S]-[ferredoxin] + H2O. It carries out the reaction androst-4-ene-3,17-dione + NADH + O2 + H(+) = 9alpha-hydroxy-androst-4-ene-3,17-dione + NAD(+) + H2O. The catalysed reaction is 3-oxochol-4-en-22-oate + NADH + O2 + H(+) = 9alpha-hydroxy-3-oxochol-4-en-22-oate + NAD(+) + H2O. It catalyses the reaction 3-oxochola-1,4-dien-22-oate + NADH + O2 + H(+) = 9alpha-hydroxy-3-oxochola-1,4-dien-22-oate + NAD(+) + H2O. The enzyme catalyses 3-oxochol-4-en-22-oyl-CoA + NADH + O2 + H(+) = 9alpha-hydroxy-3-oxochol-4-en-22-oyl-CoA + NAD(+) + H2O. It carries out the reaction 3-oxochola-1,4-dien-22-oyl-CoA + NADH + O2 + H(+) = 9alpha-hydroxy-3-oxochola-1,4-dien-22-oyl-CoA + NAD(+) + H2O. The protein operates within lipid metabolism; steroid biosynthesis. Involved in the degradation of cholesterol. Catalyzes the introduction of a 9a-hydroxyl moiety into 1,4-androstadiene-3,17-dione (ADD) to yield the 9alpha-hydroxy-1,4-androstadiene-3,17-dione (9OHADD) intermediate which spontaneously form 3-hydroxy-9,10-seconandrost-1,3,5(10)-triene-9,17-dione (HSA) via the meta-cleavage of ring B with concomitant aromatization of ring A. KSH is also able to use 4-androstene-3,17-dione (AD), 3-oxo-23,24-bisnorcholesta-4-en-22-oate (4-BNC), 3-oxo-23,24-bisnorcholesta-1,4-dien-22-oate (1,4-BNC), 3-oxo-23,24-bisnorcholesta-4-en-22-oyl-coenzyme A thioester (4-BNC-CoA) and 3-oxo-23,24-bisnorcholesta-1,4-dien-22-oyl-coenzyme A thioester (1,4-BNC-CoA) as substrates. The polypeptide is 3-ketosteroid-9-alpha-monooxygenase, oxygenase component (kshA) (Mycobacterium tuberculosis (strain ATCC 25618 / H37Rv)).